Reading from the N-terminus, the 486-residue chain is N-succinylglutamate 5-semialdehyde dehydrogenase (486 aa).

Position 220-225 (220-225) interacts with NAD(+); it reads GSSRTG. Catalysis depends on residues glutamate 243 and cysteine 277.

This sequence belongs to the aldehyde dehydrogenase family. AstD subfamily.

The enzyme catalyses N-succinyl-L-glutamate 5-semialdehyde + NAD(+) + H2O = N-succinyl-L-glutamate + NADH + 2 H(+). It functions in the pathway amino-acid degradation; L-arginine degradation via AST pathway; L-glutamate and succinate from L-arginine: step 4/5. Its function is as follows. Catalyzes the NAD-dependent reduction of succinylglutamate semialdehyde into succinylglutamate. This Shewanella frigidimarina (strain NCIMB 400) protein is N-succinylglutamate 5-semialdehyde dehydrogenase.